A 549-amino-acid chain; its full sequence is Protein EPD1 (549 aa).

A signal peptide spans 1–22; the sequence is MLLNSLFPSILAAATFVTSAAA. Residues asparagine 40 and asparagine 59 are each glycosylated (N-linked (GlcNAc...) asparagine). A disulfide bond links cysteine 72 and cysteine 101. Residues asparagine 147 and asparagine 163 are each glycosylated (N-linked (GlcNAc...) asparagine). Intrachain disulfides connect cysteine 214–cysteine 347, cysteine 232–cysteine 263, cysteine 369–cysteine 420, cysteine 378–cysteine 444, and cysteine 397–cysteine 402. Over residues 336 to 356 the composition is skewed to polar residues; sequence AESASGVSRTSCPTNTDNWEA. The segment at 336–361 is disordered; that stretch reads AESASGVSRTSCPTNTDNWEASTELP. A glycan (N-linked (GlcNAc...) asparagine) is linked at asparagine 383. N-linked (GlcNAc...) asparagine glycans are attached at residues asparagine 408 and asparagine 438. The segment at 479-519 is disordered; the sequence is SVRTDTSEATTDSGSGSSNSGSASSSKSTSSSTSSGSSGSK. The span at 487–519 shows a compositional bias: low complexity; it reads ATTDSGSGSSNSGSASSSKSTSSSTSSGSSGSK.

It belongs to the glycosyl hydrolase 72 family.

The protein localises to the cell membrane. This chain is Protein EPD1 (EPD1), found in Candida maltosa (Yeast).